A 114-amino-acid chain; its full sequence is Aspartate 1-decarboxylase (114 aa).

The Schiff-base intermediate with substrate; via pyruvic acid role is filled by Ser-25. Ser-25 is modified (pyruvic acid (Ser)). A substrate-binding site is contributed by Thr-57. The active-site Proton donor is the Tyr-58. 71–73 (GAA) is a binding site for substrate.

Belongs to the PanD family. As to quaternary structure, heterooctamer of four alpha and four beta subunits. Pyruvate serves as cofactor. Is synthesized initially as an inactive proenzyme, which is activated by self-cleavage at a specific serine bond to produce a beta-subunit with a hydroxyl group at its C-terminus and an alpha-subunit with a pyruvoyl group at its N-terminus.

The protein localises to the cytoplasm. It catalyses the reaction L-aspartate + H(+) = beta-alanine + CO2. It functions in the pathway cofactor biosynthesis; (R)-pantothenate biosynthesis; beta-alanine from L-aspartate: step 1/1. Its function is as follows. Catalyzes the pyruvoyl-dependent decarboxylation of aspartate to produce beta-alanine. The protein is Aspartate 1-decarboxylase of Campylobacter hominis (strain ATCC BAA-381 / DSM 21671 / CCUG 45161 / LMG 19568 / NCTC 13146 / CH001A).